The primary structure comprises 290 residues: Glycine--tRNA ligase alpha subunit (290 aa).

The protein belongs to the class-II aminoacyl-tRNA synthetase family. Tetramer of two alpha and two beta subunits.

The protein resides in the cytoplasm. It carries out the reaction tRNA(Gly) + glycine + ATP = glycyl-tRNA(Gly) + AMP + diphosphate. The polypeptide is Glycine--tRNA ligase alpha subunit (Prochlorococcus marinus (strain NATL1A)).